The primary structure comprises 101 residues: MFQQLNCTNISSLLFLVSLLGIFLNQKNILVMLMSLEMMFLSISFNLIFSSIRLDDIIGQIFSLLILTVAAAESSIGLAILVIYYRIRSTITVELMNLMKG.

3 consecutive transmembrane segments (helical) span residues Leu5 to Asn25, Ile29 to Phe49, and Leu64 to Tyr84.

Belongs to the complex I subunit 4L family.

Its subcellular location is the mitochondrion membrane. The catalysed reaction is a ubiquinone + NADH + 5 H(+)(in) = a ubiquinol + NAD(+) + 4 H(+)(out). Core subunit of the mitochondrial membrane respiratory chain NADH dehydrogenase (Complex I) that is believed to belong to the minimal assembly required for catalysis. Complex I functions in the transfer of electrons from NADH to the respiratory chain. The immediate electron acceptor for the enzyme is believed to be ubiquinone. This chain is NADH-ubiquinone oxidoreductase chain 4L (ND4L), found in Chondrus crispus (Carrageen Irish moss).